The sequence spans 425 residues: UBX domain-containing protein 4 (425 aa).

Positions 224–257 are disordered; that stretch reads TPIPSLPSTPSSYQNLPSQSLTGESLPTVSNQEK. The segment covering 236-254 has biased composition (polar residues); that stretch reads YQNLPSQSLTGESLPTVSN. Residue Ser338 is modified to Phosphoserine. Residues 341–390 enclose the UBX domain; it reads PLPSSAIVKFDFGNGKSIVHEFSKDDNIETLRAFVASHLSPEESTSFQLT.

The protein localises to the cytoplasm. Its subcellular location is the nucleus. Involved in CDC48-dependent protein degradation through the ubiquitin/proteasome pathway. The protein is UBX domain-containing protein 4 (ubx4) of Schizosaccharomyces pombe (strain 972 / ATCC 24843) (Fission yeast).